The primary structure comprises 210 residues: Thymidylate kinase (210 aa).

10-17 (GPEGAGKS) lines the ATP pocket.

The protein belongs to the thymidylate kinase family.

It catalyses the reaction dTMP + ATP = dTDP + ADP. Its function is as follows. Phosphorylation of dTMP to form dTDP in both de novo and salvage pathways of dTTP synthesis. The sequence is that of Thymidylate kinase from Pseudomonas syringae pv. tomato (strain ATCC BAA-871 / DC3000).